We begin with the raw amino-acid sequence, 152 residues long: Nucleoside diphosphate kinase B (152 aa).

The interval 1-66 (MANLERTFIA…DRPFFPGLVK (66 aa)) is interaction with AKAP13. Residues K12, F60, R88, T94, R105, and N115 each coordinate ATP. The active-site Pros-phosphohistidine intermediate is the H118.

This sequence belongs to the NDK family. Hexamer of two different chains: An and B (A6, A5B, A4B2, A3B3, A2B4, AB5, B6). Interacts with CAPN8. Interacts with AKAP13. Interacts with ITGB1BP1 (via C-terminal domain region). Interacts with BCL2L10. Requires Mg(2+) as cofactor. Post-translationally, the N-terminus is blocked.

It localises to the cytoplasm. The protein localises to the cell projection. It is found in the lamellipodium. Its subcellular location is the ruffle. The protein resides in the nucleus. The catalysed reaction is a 2'-deoxyribonucleoside 5'-diphosphate + ATP = a 2'-deoxyribonucleoside 5'-triphosphate + ADP. It carries out the reaction a ribonucleoside 5'-diphosphate + ATP = a ribonucleoside 5'-triphosphate + ADP. It catalyses the reaction ATP + protein L-histidine = ADP + protein N-phospho-L-histidine.. Major role in the synthesis of nucleoside triphosphates other than ATP. The ATP gamma phosphate is transferred to the NDP beta phosphate via a ping-pong mechanism, using a phosphorylated active-site intermediate. Negatively regulates Rho activity by interacting with AKAP13/LBC. Acts as a transcriptional activator of the MYC gene; binds DNA non-specifically. Binds to both single-stranded guanine- and cytosine-rich strands within the nuclease hypersensitive element (NHE) III(1) region of the MYC gene promoter. Does not bind to duplex NHE III(1). Has G-quadruplex (G4) DNA-binding activity, which is independent of its nucleotide-binding and kinase activity. Binds both folded and unfolded G4 with similar low nanomolar affinities. Stabilizes folded G4s regardless of whether they are prefolded or not. Exhibits histidine protein kinase activity. The polypeptide is Nucleoside diphosphate kinase B (Nme2) (Rattus norvegicus (Rat)).